Here is a 628-residue protein sequence, read N- to C-terminus: MRPKEQVQSGAGDGTGSGDPAAGTPTTQPAVGPAPEPSAEPKPAPAQGTGSGQKSGSRTKTGSFCRSMIIGDSDAPWTRYVFQGPYGPRATGLGTGKAEGIWKTPAAYIGRRPGVSGPERAAFIRELQEALCPNPPPTKKITEDDVKVMLYLLEEKERDLNTAARIGQSLVKQNSVLMEENNKLETMLGSAREEILHLRKQVNLRDDLLQLYSDSDDDDDEEDEEDEEEGEEEEREGQRDQDQQHDHPYGAPKPHPKAETAHRCPQLETLQQKLRLLEEENDHLREEASHLDNLEDEEQMLILECVEQFSEASQQMAELSEVLVLRLEGYERQQKEITQLQAEITKLQQRCQSYGAQTEKLQQMLASEKGIHSESLRAGSYMQDYGSRPRDRQEDGKSHRQRSSMPAGSVTHYGYSVPLDALPSFPETLAEELRTSLRKFITDPAYFMERRDTHCREGRKKEQRAMPPPPAQDLKPPEDFEAPEELVPEEELGAIEEVGTAEDGQAEENEQASEETEAWEEVEPEVDETTRMNVVVSALEASGLGPSHLDMKYVLQQLSNWQDAHSKRQQKQKVVPKDSPTPQQQTNMGGGILEQQPRVPTQDSQRLEEDRATHSPSAREEEGPSGAT.

Disordered regions lie at residues 1–62 (MRPK…TKTG) and 212–264 (YSDS…AHRC). Residues 32-44 (GPAPEPSAEPKPA) are compositionally biased toward pro residues. The segment covering 52 to 62 (GQKSGSRTKTG) has biased composition (polar residues). Positions 79–403 (RYVFQGPYGP…EDGKSHRQRS (325 aa)) constitute an HAP1 N-terminal domain. The interval 152 to 319 (LLEEKERDLN…SEASQQMAEL (168 aa)) is sufficient for interaction with KIF5B. The segment at 157–261 (ERDLNTAARI…PKPHPKAETA (105 aa)) is interaction with TBP. Coiled coils occupy residues 168-301 (QSLV…EQML) and 327-367 (LEGY…MLAS). The segment covering 214–235 (DSDDDDDEEDEEDEEEGEEEER) has biased composition (acidic residues). Over residues 236–248 (EGQRDQDQQHDHP) the composition is skewed to basic and acidic residues. The sufficient for self-association and interaction with HD stretch occupies residues 276–444 (LLEEENDHLR…TSLRKFITDP (169 aa)). 3 disordered regions span residues 372–411 (HSESLRAGSYMQDYGSRPRDRQEDGKSHRQRSSMPAGSVT), 451–529 (RDTH…VDET), and 562–628 (QDAH…SGAT). Composition is skewed to basic and acidic residues over residues 387–398 (SRPRDRQEDGKS) and 451–464 (RDTHCREGRKKEQR). The segment at 473–582 (DLKPPEDFEA…KVVPKDSPTP (110 aa)) is interaction with TBP. 2 stretches are compositionally biased toward acidic residues: residues 479 to 494 (DFEAPEELVPEEELGA) and 504 to 527 (GQAEENEQASEETEAWEEVEPEVD). The residue at position 598 (arginine 598) is a Phosphothreonine. Basic and acidic residues predominate over residues 605–622 (QRLEEDRATHSPSAREEE).

As to quaternary structure, self-associates. Interacts with HTT/huntingtin; enhanced by an expanded polyglutamine repeat within HTT. Isoform A interacts with DCTN1; decreased in presence of HTT with expanded polyglutamine repeat; decreased by phosphorylation of Hap1 isoform A at Thr-598. Isoform A interacts with KLC2; decreased by phosphorylation of Hap1 isoform A at Thr-598. Isoform A interacts with ITPR1 and APP. Isoform A interacts with AR; decreased by an expanded polyglutamine repeat within AR. Isoform A interacts with YWHAZ; enhanced by phosphorylation of Hap1 isoform A at Thr-598. Isoform A interacts with BDNF and SORT1; probably forming a complex involved in proBDNF trafficking, degradation and processing. Interacts with TBP, AHI1, HGS and KALRN. Interacts with KIF5A, KIF5B, KIF5C and GABRB3; indicative for an HAP1:KIF5 complex transporting a GABA(A) receptor as cargo. Interacts with ATXN3; in STBs. Interacts with NTRK2; HAP1 stabilizes association of NTRK2 with SORT1 preventing NTRK2 degradation. Interacts with CFAP263. Isoform A is phosphorylated on Thr-598.

The protein resides in the cytoplasm. It localises to the presynapse. It is found in the cytoskeleton. The protein localises to the cell projection. Its subcellular location is the dendritic spine. The protein resides in the dendrite. It localises to the axon. It is found in the lysosome. The protein localises to the endoplasmic reticulum. Its subcellular location is the mitochondrion. The protein resides in the nucleus. It localises to the cytoplasmic vesicle. It is found in the autophagosome. The protein localises to the early endosome. Its subcellular location is the growth cone. The protein resides in the neuron projection. It localises to the secretory vesicle. It is found in the synaptic vesicle. Its function is as follows. Originally identified as neuronal protein that specifically associates with HTT/huntingtin and the binding is enhanced by an expanded polyglutamine repeat within HTT possibly affecting HAP1 interaction properties. Both HTT and HAP1 are involved in intracellular trafficking and HAP1 is proposed to link HTT to motor proteins and/or transport cargos. Seems to play a role in vesicular transport within neurons and axons such as from early endosomes to late endocytic compartments and to promote neurite outgrowth. The vesicular transport function via association with microtubule-dependent transporters can be attenuated by association with mutant HTT. Involved in the axonal transport of BDNF and its activity-dependent secretion; the function seems to involve HTT, DCTN1 and a complex with SORT1. Involved in APP trafficking and seems to facilitate APP anterograde transport and membrane insertion thereby possibly reducing processing into amyloid beta. Involved in delivery of gamma-aminobutyric acid (GABA(A)) receptors to synapses; the function is dependent on kinesin motor protein KIF5 and is disrupted by HTT with expanded polyglutamine repeat. Involved in regulation of autophagosome motility by promoting efficient retrograde axonal transport. Seems to be involved in regulation of membrane receptor recycling and degradation, and respective signal transduction, including GABA(A) receptors, tyrosine kinase receptors, EGFR, IP3 receptor and androgen receptor. Among others suggested to be involved in control of feeding behavior (involving hypothalamic GABA(A) receptors), cerebellar and brainstem development (involving AHI1 and NTRK1/TrkA), postnatal neurogenesis (involving hypothalamic NTRK2/TrkB regulating the number of Npyr1-expressing cells), and ITPR1/InsP3R1-mediated Ca(2+) release (involving HTT and possibly the effect of mutant HTT). Via association with DCTN1/dynactin p150-glued and HTT/huntingtin involved in cytoplasmic retention of REST in neurons. May be involved in ciliogenesiss; however, reports are conflicting: PubMed:21985783 reports that Hap1 is required for ciliogenesis in primary cortical neurons and proposes that HTT interacts with PCM1 through HAP1; PubMed:23532844 reports that mice with disrupted Hap1 display normal cilium formation and function. Involved in regulation of exocytosis. Isoform A but not isoform B seems to be involved in formation of cytoplasmic inclusion bodies (STBs). In case of anomalous expression of TBP, can sequester a subset of TBP into STBs; sequestration is enhanced by an expanded polyglutamine repeat within TBP. The sequence is that of Huntingtin-associated protein 1 (Hap1) from Mus musculus (Mouse).